The primary structure comprises 495 residues: 3-octaprenyl-4-hydroxybenzoate carboxy-lyase (495 aa).

A Mn(2+)-binding site is contributed by Asn-172. Residues 175 to 177 (IYR), 189 to 191 (RWL), and 194 to 195 (RG) each bind prenylated FMN. Glu-238 is a Mn(2+) binding site. Catalysis depends on Asp-287, which acts as the Proton donor.

Belongs to the UbiD family. As to quaternary structure, homohexamer. It depends on prenylated FMN as a cofactor. The cofactor is Mn(2+).

It is found in the cell membrane. The enzyme catalyses a 4-hydroxy-3-(all-trans-polyprenyl)benzoate + H(+) = a 2-(all-trans-polyprenyl)phenol + CO2. It participates in cofactor biosynthesis; ubiquinone biosynthesis. Functionally, catalyzes the decarboxylation of 3-octaprenyl-4-hydroxy benzoate to 2-octaprenylphenol, an intermediate step in ubiquinone biosynthesis. The chain is 3-octaprenyl-4-hydroxybenzoate carboxy-lyase from Edwardsiella ictaluri (strain 93-146).